The following is a 127-amino-acid chain: Aspartate 1-decarboxylase (127 aa).

The active-site Schiff-base intermediate with substrate; via pyruvic acid is the serine 25. Serine 25 is subject to Pyruvic acid (Ser). Substrate is bound at residue threonine 57. The active-site Proton donor is tyrosine 58. Position 73–75 (73–75 (GAA)) interacts with substrate.

Belongs to the PanD family. As to quaternary structure, heterooctamer of four alpha and four beta subunits. The cofactor is pyruvate. In terms of processing, is synthesized initially as an inactive proenzyme, which is activated by self-cleavage at a specific serine bond to produce a beta-subunit with a hydroxyl group at its C-terminus and an alpha-subunit with a pyruvoyl group at its N-terminus.

The protein resides in the cytoplasm. It carries out the reaction L-aspartate + H(+) = beta-alanine + CO2. It participates in cofactor biosynthesis; (R)-pantothenate biosynthesis; beta-alanine from L-aspartate: step 1/1. Catalyzes the pyruvoyl-dependent decarboxylation of aspartate to produce beta-alanine. This chain is Aspartate 1-decarboxylase, found in Clostridium botulinum (strain Loch Maree / Type A3).